We begin with the raw amino-acid sequence, 171 residues long: MSSKKAKTKTKKRPQRATSNVFAMFDQSQIQEFKEAFNMIDQNRDGFIDKEDLHDMLASLGKNPTDAYLEAMMNEAPGPINFTMFLTMFGEKLNGTDPEDVIRNAFACFDEEATGTIQEDYLRELLTTMGDRFTDEEVDELYREAPIDKKGNFNYIEFTRILKHGAKDKDD.

T18 carries the phosphothreonine; by MLCK and ZIPK/DAPK3 modification. A Phosphoserine; by MLCK and ZIPK/DAPK3 modification is found at S19. 3 consecutive EF-hand domains span residues 28 to 63, 97 to 132, and 133 to 168; these read SQIQ…LGKN, DPED…MGDR, and FTDE…GAKD. D41, N43, D45, and D52 together coordinate Ca(2+).

As to quaternary structure, myosin is a hexamer of 2 heavy chains and 4 light chains: interacts with myosin heavy chain MYO19. Phosphorylation increases the actin-activated myosin ATPase activity and thereby regulates the contractile activity. It is required to generate the driving force in the migration of the cells but not necessary for localization of myosin-2 at the leading edge. Phosphorylation is reduced following epigallocatechin-3-O-gallate treatment.

In terms of biological role, myosin regulatory subunit that plays an important role in regulation of both smooth muscle and nonmuscle cell contractile activity via its phosphorylation. Phosphorylation triggers actin polymerization in vascular smooth muscle. Implicated in cytokinesis, receptor capping, and cell locomotion. The polypeptide is Myosin regulatory light chain 12B (MYL12B) (Bos taurus (Bovine)).